Consider the following 456-residue polypeptide: Tyrosinase-like protein (456 aa).

An N-terminal signal peptide occupies residues 1-22; that stretch reads MNTMTLLGKVFLLQFLIGVGFC. Residues His-145, His-154, His-163, His-295, His-299, and His-322 each contribute to the Cu cation site.

It belongs to the tyrosinase family. The cofactor is Cu(2+). Prismatic layer of shell (at protein level).

The protein localises to the secreted. The polypeptide is Tyrosinase-like protein (Pinctada maxima (Silver-lipped pearl oyster)).